A 375-amino-acid chain; its full sequence is Chaperone protein DnaJ (375 aa).

Positions 5 to 70 (DYYEVLGVNR…QKKGAYDRYG (66 aa)) constitute a J domain. The CR-type zinc-finger motif lies at 134–212 (GAEKTIRIPT…CGGAGRVKKQ (79 aa)). Residues Cys-147, Cys-150, Cys-164, Cys-167, Cys-186, Cys-189, Cys-200, and Cys-203 each coordinate Zn(2+). 4 CXXCXGXG motif repeats span residues 147–154 (CGTCHGSG), 164–171 (CPTCGGAG), 186–193 (CPKCHGTG), and 200–207 (CGDCGGAG).

The protein belongs to the DnaJ family. Homodimer. It depends on Zn(2+) as a cofactor.

It is found in the cytoplasm. In terms of biological role, participates actively in the response to hyperosmotic and heat shock by preventing the aggregation of stress-denatured proteins and by disaggregating proteins, also in an autonomous, DnaK-independent fashion. Unfolded proteins bind initially to DnaJ; upon interaction with the DnaJ-bound protein, DnaK hydrolyzes its bound ATP, resulting in the formation of a stable complex. GrpE releases ADP from DnaK; ATP binding to DnaK triggers the release of the substrate protein, thus completing the reaction cycle. Several rounds of ATP-dependent interactions between DnaJ, DnaK and GrpE are required for fully efficient folding. Also involved, together with DnaK and GrpE, in the DNA replication of plasmids through activation of initiation proteins. The protein is Chaperone protein DnaJ of Azoarcus sp. (strain BH72).